Reading from the N-terminus, the 404-residue chain is Glucose-1-phosphate adenylyltransferase (404 aa).

Alpha-D-glucose 1-phosphate is bound by residues Y99, G164, 179 to 180, and S197; that span reads EK.

Belongs to the bacterial/plant glucose-1-phosphate adenylyltransferase family. In terms of assembly, homotetramer.

It carries out the reaction alpha-D-glucose 1-phosphate + ATP + H(+) = ADP-alpha-D-glucose + diphosphate. It functions in the pathway glycan biosynthesis; glycogen biosynthesis. In terms of biological role, involved in the biosynthesis of ADP-glucose, a building block required for the elongation reactions to produce glycogen. Catalyzes the reaction between ATP and alpha-D-glucose 1-phosphate (G1P) to produce pyrophosphate and ADP-Glc. The protein is Glucose-1-phosphate adenylyltransferase of Rhodococcus opacus (strain B4).